Consider the following 648-residue polypeptide: Acetyl-coenzyme A synthetase (648 aa).

CoA is bound by residues 190–193 (RGGK), Thr308, and Asn332. ATP-binding positions include 384 to 386 (GEP), 408 to 413 (DTWWQT), Asp497, and Arg512. Ser520 is a CoA binding site. Arg523 contributes to the ATP binding site. Residues Val534, His536, and Val539 each contribute to the Mg(2+) site. A CoA-binding site is contributed by Arg581. Lys606 carries the N6-acetyllysine modification.

It belongs to the ATP-dependent AMP-binding enzyme family. The cofactor is Mg(2+). In terms of processing, acetylated. Deacetylation by the SIR2-homolog deacetylase activates the enzyme.

It carries out the reaction acetate + ATP + CoA = acetyl-CoA + AMP + diphosphate. In terms of biological role, catalyzes the conversion of acetate into acetyl-CoA (AcCoA), an essential intermediate at the junction of anabolic and catabolic pathways. AcsA undergoes a two-step reaction. In the first half reaction, AcsA combines acetate with ATP to form acetyl-adenylate (AcAMP) intermediate. In the second half reaction, it can then transfer the acetyl group from AcAMP to the sulfhydryl group of CoA, forming the product AcCoA. This is Acetyl-coenzyme A synthetase from Bradyrhizobium diazoefficiens (strain JCM 10833 / BCRC 13528 / IAM 13628 / NBRC 14792 / USDA 110).